The primary structure comprises 158 residues: Cyclic pyranopterin monophosphate synthase (158 aa).

Substrate-binding positions include 75 to 77 and 113 to 114; these read LCH and ME. The active site involves aspartate 128.

This sequence belongs to the MoaC family. In terms of assembly, homohexamer; trimer of dimers.

It carries out the reaction (8S)-3',8-cyclo-7,8-dihydroguanosine 5'-triphosphate = cyclic pyranopterin phosphate + diphosphate. The protein operates within cofactor biosynthesis; molybdopterin biosynthesis. Functionally, catalyzes the conversion of (8S)-3',8-cyclo-7,8-dihydroguanosine 5'-triphosphate to cyclic pyranopterin monophosphate (cPMP). The protein is Cyclic pyranopterin monophosphate synthase of Dinoroseobacter shibae (strain DSM 16493 / NCIMB 14021 / DFL 12).